The primary structure comprises 177 residues: Small ribosomal subunit protein uS5 (177 aa).

An S5 DRBM domain is found at 19–82 (FIEKLVAIKR…DQAQKQMIKV (64 aa)).

It belongs to the universal ribosomal protein uS5 family. As to quaternary structure, part of the 30S ribosomal subunit. Contacts proteins S4 and S8.

In terms of biological role, with S4 and S12 plays an important role in translational accuracy. Its function is as follows. Located at the back of the 30S subunit body where it stabilizes the conformation of the head with respect to the body. This is Small ribosomal subunit protein uS5 from Magnetococcus marinus (strain ATCC BAA-1437 / JCM 17883 / MC-1).